Here is a 215-residue protein sequence, read N- to C-terminus: MTTITPEAARLRLAQYLSPAFPTGGFAWSQGLEWAMDQGAVTRATLPQWLEDWLDHGAGWCDAVLLSLALRRGADHAELDDLARAMCPCARRLAETVEQGTAFAANVAALTGRPQSAAALPVAVGRACGCLPLPAGEIIGLYLQAQAAALISAAVRFLPLGPVEGQAMLAGLQPALLAAAARAGTADPKDLASATWGADLAAMRHETMVTRIFRS.

The protein belongs to the UreF family. UreD, UreF and UreG form a complex that acts as a GTP-hydrolysis-dependent molecular chaperone, activating the urease apoprotein by helping to assemble the nickel containing metallocenter of UreC. The UreE protein probably delivers the nickel.

The protein localises to the cytoplasm. In terms of biological role, required for maturation of urease via the functional incorporation of the urease nickel metallocenter. This chain is Urease accessory protein UreF, found in Paracoccus denitrificans (strain Pd 1222).